The chain runs to 1140 residues: GPI inositol-deacylase (1140 aa).

Residues 1 to 84 are disordered; the sequence is MHRRSSGSSP…TTWASHDPPR (84 aa). Positions 55–78 are enriched in polar residues; it reads GKSTPRSRNSSTWRTLSSATTTWA. Asn63 carries N-linked (GlcNAc...) asparagine glycosylation. The chain crosses the membrane as a helical span at residues 117–137; it reads SCSILTALTTILACVFLFSIV. Ser304 is a catalytic residue. Residues 782 to 802 traverse the membrane as a helical segment; the sequence is LVMRYRTVFAAFPLLVVSLTL. Asn862 carries an N-linked (GlcNAc...) asparagine glycan. 7 helical membrane passes run 882–902, 905–925, 952–972, 1002–1022, 1039–1059, 1070–1090, and 1094–1114; these read AFFWFLVPLFGLICVGVCVLL, VALIVLQILSVVYGLWNSKSG, VLLVLVSTAIPYQFAYLVACI, SVFILMLWVLPINILVLLVWA, VLSIMPFIILVETMTTGSMIP, SVLLFCIAVYSAVYGVSYAYI, and LVNILAGWLVSIYFFRSGFSL.

Belongs to the GPI inositol-deacylase family.

Its subcellular location is the endoplasmic reticulum membrane. Functionally, involved in inositol deacylation of GPI-anchored proteins which plays important roles in the quality control and ER-associated degradation of GPI-anchored proteins. The chain is GPI inositol-deacylase (bst1) from Emericella nidulans (strain FGSC A4 / ATCC 38163 / CBS 112.46 / NRRL 194 / M139) (Aspergillus nidulans).